The sequence spans 117 residues: MDKSKRPFIKSKRSFRRRLPPIKSGDRIDYRNISLISRFLSEQGKILSKRVNRFTLKQQRLITLAIKQARILSLLPFTKRKGFERSELTPRTNALKARNKNKQNKYQNNQTKFLSNF.

The segment at S86–F117 is disordered.

The protein belongs to the bacterial ribosomal protein bS18 family. As to quaternary structure, part of the 30S ribosomal subunit.

It is found in the plastid. The sequence is that of Small ribosomal subunit protein bS18c from Cuscuta exaltata (Tall dodder).